Reading from the N-terminus, the 761-residue chain is Signal transducer and transcription activator (761 aa).

The SH2 domain occupies 594 to 658; it reads WKAGCIMGFI…APWTARDFQV (65 aa). The residue at position 711 (tyrosine 711) is a Phosphotyrosine; by JAK.

Belongs to the transcription factor STAT family. As to quaternary structure, forms a homodimer or a heterodimer with a related family member. Tyrosine phosphorylated by hopscotch. Phosphorylation is required for DNA-binding activity and dimerization.

Its subcellular location is the cytoplasm. The protein localises to the nucleus. Functionally, might play a role in signal transduction and activation of transcription. Plays an important role in the segmental pattern formation in the early embryo by activating specific stripes of pair rule gene expression in early development as part of the Janus kinase-STAT pathway. Might play a role in male germline stem cell maintenance. This Drosophila melanogaster (Fruit fly) protein is Signal transducer and transcription activator (Stat92E).